We begin with the raw amino-acid sequence, 122 residues long: Structural protein p14.5 (122 aa).

Disordered stretches follow at residues 1 to 27 (MADFNSPIQYLKEDSRDRTSIGSLEYD) and 85 to 122 (TSLVPEETDNKPEDDEESGAKPKKKKHLFPKLSSHKSK). A2 bears the N-acetylalanine; by host mark. The segment covering 105 to 122 (KPKKKKHLFPKLSSHKSK) has biased composition (basic residues).

The protein belongs to the asfivirus structural protein p14.5 family. Interacts with the major capsid protein. Interacts with host IRF3; this interaction interferes with the recruitment of IRF3 to TBK1. In terms of processing, acetylated.

The protein localises to the virion. Functionally, structural protein required for transport of intracellular particles from the assembly sites to the plasma membrane. Binds to both ssDNA and dsDNA. Suppressed the activation of the cGAS/STING pathway by interfering with the recruitment of IRF3 to TBK1, which in turn suppresses IRF3 phosphorylation, decreasing interferon production. The polypeptide is Structural protein p14.5 (African swine fever virus (isolate Tick/Malawi/Lil 20-1/1983) (ASFV)).